The sequence spans 24 residues: Small ribosomal subunit protein uS5 (24 aa).

Belongs to the universal ribosomal protein uS5 family. In terms of assembly, part of the 30S ribosomal subunit. Contacts proteins S4 and S8.

With S4 and S12 plays an important role in translational accuracy. Functionally, located at the back of the 30S subunit body where it stabilizes the conformation of the head with respect to the body. This Vibrio proteolyticus (Aeromonas proteolytica) protein is Small ribosomal subunit protein uS5 (rpsE).